The following is a 766-amino-acid chain: 5-methyltetrahydropteroyltriglutamate--homocysteine methyltransferase 1 (766 aa).

Positions 18 and 116 each coordinate 5-methyltetrahydropteroyltri-L-glutamate. Residues 438–440 (IGS) and Glu491 contribute to the L-homocysteine site. Residues 438 to 440 (IGS) and Glu491 each bind L-methionine. 5-methyltetrahydropteroyltri-L-glutamate-binding positions include Asp496, Tyr519, 522-523 (RC), and Trp568. Asp606 serves as a coordination point for L-homocysteine. Asp606 is an L-methionine binding site. Zn(2+)-binding residues include His648, Cys650, His659, and Glu672. The active-site Proton donor is His702. Cys734 contributes to the Zn(2+) binding site.

It belongs to the vitamin-B12 independent methionine synthase family. The cofactor is Zn(2+).

The protein localises to the cytoplasm. It is found in the cytosol. It carries out the reaction 5-methyltetrahydropteroyltri-L-glutamate + L-homocysteine = tetrahydropteroyltri-L-glutamate + L-methionine. The protein operates within amino-acid biosynthesis; L-methionine biosynthesis via de novo pathway; L-methionine from L-homocysteine (MetE route): step 1/1. Catalyzes the transfer of a methyl group from 5-methyltetrahydrofolate to homocysteine resulting in methionine formation. In Oryza sativa subsp. japonica (Rice), this protein is 5-methyltetrahydropteroyltriglutamate--homocysteine methyltransferase 1.